The sequence spans 200 residues: Large ribosomal subunit protein uL4 (200 aa).

The tract at residues 38-67 (GRQGSKAQKTRSEVSGGGKKPWRQKGTGRA) is disordered.

This sequence belongs to the universal ribosomal protein uL4 family. In terms of assembly, part of the 50S ribosomal subunit.

Functionally, one of the primary rRNA binding proteins, this protein initially binds near the 5'-end of the 23S rRNA. It is important during the early stages of 50S assembly. It makes multiple contacts with different domains of the 23S rRNA in the assembled 50S subunit and ribosome. Its function is as follows. Forms part of the polypeptide exit tunnel. The chain is Large ribosomal subunit protein uL4 from Pseudomonas paraeruginosa (strain DSM 24068 / PA7) (Pseudomonas aeruginosa (strain PA7)).